A 400-amino-acid polypeptide reads, in one-letter code: N(alpha)-acyl-glutamine aminoacylase (400 aa).

The protein belongs to the peptidase M20 family. It depends on Zn(2+) as a cofactor.

It carries out the reaction an N(2)-acyl-L-glutamine + H2O = a carboxylate + L-glutamine. The catalysed reaction is N(2)-[(2E)-3-methylhex-2-enoyl]-L-glutaminate + H2O = (2E)-3-methylhex-2-enoate + L-glutamine. It catalyses the reaction N(2)-(3-hydroxy-3-methylhexanoyl)-L-glutaminate + H2O = 3-hydroxy-3-methylhexanoate + L-glutamine. Its activity is regulated as follows. Partial loss of activity with the combination Mn(2+) and chelating agents. Activity is lost in presence of 0.5 mM dithiothreitol. In terms of biological role, hydrolyzes odorless N-alpha-acyl-L-glutamine conjugates of short- and medium-chain fatty acids, releasing human axillary malodor compounds. The enzyme is highly specific for the glutamine residue but has a low specificity for the acyl part of the substrate. The two most common products are 3-methyl-2-hexenoic acid (3M2H) and 3-hydroxy-3-methyl-hexanoic acid (HMHA), which are produced from the odorless precursors N-alpha-3-methyl-2-hexenoyl-L-glutamine (3M2H-Gln) and N-alpha-3-hydroxy-3-methylhexanoyl-L-glutamine (HMHA-Gln). In addition, over 28 different carboxylic acids contributing to human body odor are released by this enzyme from odorless axilla secretions, including several aliphatic 3-hydroxy acids with 4-Me branches, 3,4-unsaturated, 4-Et-branched aliphatic acids, and a variety of degradation products of amino acids. This Corynebacterium striatum protein is N(alpha)-acyl-glutamine aminoacylase.